A 338-amino-acid chain; its full sequence is Endonuclease V (338 aa).

Asp52 and Asp126 together coordinate Mg(2+). A disordered region spans residues 253–338 (QLGVAPAQRK…PSPAWVQSPP (86 aa)). 2 stretches are compositionally biased toward basic and acidic residues: residues 260–270 (QRKDRSQKEQR) and 287–323 (RPPE…HQED). Pro residues predominate over residues 328-338 (PPSPAWVQSPP).

It belongs to the endonuclease V family. In terms of assembly, monomer. Interacts with PABPC1; the interaction is RNA-dependent and stimulates ENDOV activity. Mg(2+) is required as a cofactor. As to expression, highest levels detected in liver with high levels also found in heart, kidney and testis. Expressed at low levels in brain.

Its subcellular location is the cytoplasm. It localises to the nucleus. The protein localises to the nucleolus. It is found in the stress granule. In terms of biological role, endoribonuclease that specifically cleaves inosine-containing RNAs: cleaves RNA at the second phosphodiester bond 3' to inosine. Active against both single-stranded and double-stranded RNAs. Has strong preference for single-stranded RNAs (ssRNAs) toward double-stranded RNAs (dsRNAs). Cleaves mRNAs and tRNAs containing inosine. Also able to cleave structure-specific dsRNA substrates containing the specific sites 5'-IIUI-3' and 5'-UIUU-3'. Inosine is present in a number of RNAs following editing; the function of inosine-specific endoribonuclease is still unclear: it could either play a regulatory role in edited RNAs, or be involved in antiviral response by removing the hyperedited long viral dsRNA genome that has undergone A-to-I editing. Binds branched DNA structures. The chain is Endonuclease V (Endov) from Mus musculus (Mouse).